Reading from the N-terminus, the 105-residue chain is U1-sicaritoxin-Li1b (105 aa).

Positions 1–19 are cleaved as a signal peptide; it reads MKLLFEGLLVLVLIAFVVA. A propeptide spanning residues 20–36 is cleaved from the precursor; it reads EFESDAEKWEALITQER. 4 disulfide bridges follow: cysteine 38–cysteine 55, cysteine 46–cysteine 60, cysteine 54–cysteine 73, and cysteine 62–cysteine 71. Arginine 82 is subject to Arginine amide. The propeptide occupies 86 to 105; that stretch reads ALMVDPETHRMLSLHRLSEE.

It belongs to the neurotoxin 28 (Litx) family. Expressed by the venom gland.

Its subcellular location is the secreted. Functionally, toxin active against insects (S.frugiperda larvae). May act on sodium (Nav) or calcium (Cav) channels. In Loxosceles intermedia (Brown spider), this protein is U1-sicaritoxin-Li1b.